A 135-amino-acid polypeptide reads, in one-letter code: Ribonuclease P protein component (135 aa).

The tract at residues 115 to 135 (TNETVSPVSDTPLPQHERGSQ) is disordered.

The protein belongs to the RnpA family. As to quaternary structure, consists of a catalytic RNA component (M1 or rnpB) and a protein subunit.

The enzyme catalyses Endonucleolytic cleavage of RNA, removing 5'-extranucleotides from tRNA precursor.. In terms of biological role, RNaseP catalyzes the removal of the 5'-leader sequence from pre-tRNA to produce the mature 5'-terminus. It can also cleave other RNA substrates such as 4.5S RNA. The protein component plays an auxiliary but essential role in vivo by binding to the 5'-leader sequence and broadening the substrate specificity of the ribozyme. The polypeptide is Ribonuclease P protein component (Chloroflexus aurantiacus (strain ATCC 29366 / DSM 635 / J-10-fl)).